Here is a 93-residue protein sequence, read N- to C-terminus: UPF0223 protein SAG0995 (93 aa).

It belongs to the UPF0223 family.

The protein is UPF0223 protein SAG0995 of Streptococcus agalactiae serotype V (strain ATCC BAA-611 / 2603 V/R).